The primary structure comprises 883 residues: Phosphoenolpyruvate carboxylase (883 aa).

Catalysis depends on residues His138 and Lys546.

It belongs to the PEPCase type 1 family. Requires Mg(2+) as cofactor.

The enzyme catalyses oxaloacetate + phosphate = phosphoenolpyruvate + hydrogencarbonate. In terms of biological role, forms oxaloacetate, a four-carbon dicarboxylic acid source for the tricarboxylic acid cycle. This Salmonella schwarzengrund (strain CVM19633) protein is Phosphoenolpyruvate carboxylase.